Consider the following 293-residue polypeptide: UDP-N-acetylglucosamine transferase subunit ALG13 (293 aa).

This sequence belongs to the glycosyltransferase 28 family. As to quaternary structure, heterodimer with ALG14 to form a functional enzyme.

It is found in the endoplasmic reticulum. The enzyme catalyses an N-acetyl-alpha-D-glucosaminyl-diphospho-di-trans,poly-cis-dolichol + UDP-N-acetyl-alpha-D-glucosamine = an N,N'-diacetylchitobiosyl-diphospho-di-trans,poly-cis-dolichol + UDP + H(+). Involved in protein N-glycosylation. Essential for the second step of the dolichol-linked oligosaccharide pathway. The polypeptide is UDP-N-acetylglucosamine transferase subunit ALG13 (ALG13) (Candida albicans (strain SC5314 / ATCC MYA-2876) (Yeast)).